The sequence spans 245 residues: Ribonuclease 3 (245 aa).

Positions 19 to 148 (FKLFQEKIGI…FIGALYLDQG (130 aa)) constitute an RNase III domain. Position 61 (Glu61) interacts with Mg(2+). The active site involves Asp65. Asp134 and Glu137 together coordinate Mg(2+). Residue Glu137 is part of the active site. Residues 174-243 (DYKSQLQELI…AAEALKKLKE (70 aa)) form the DRBM domain.

This sequence belongs to the ribonuclease III family. As to quaternary structure, homodimer. Mg(2+) serves as cofactor.

It localises to the cytoplasm. The catalysed reaction is Endonucleolytic cleavage to 5'-phosphomonoester.. Functionally, digests double-stranded RNA. Involved in the processing of primary rRNA transcript to yield the immediate precursors to the large and small rRNAs (23S and 16S). Processes some mRNAs, and tRNAs when they are encoded in the rRNA operon. Processes pre-crRNA and tracrRNA of type II CRISPR loci if present in the organism. This chain is Ribonuclease 3, found in Bacillus cereus (strain 03BB102).